Here is a 26-residue protein sequence, read N- to C-terminus: Nicotinic acetylcholine receptor-binding protein Mnn-1A (26 aa).

Residues C3 and C22 are joined by a disulfide bond.

Belongs to the three-finger toxin family. Short-chain subfamily. As to expression, expressed by the venom gland.

Its subcellular location is the secreted. Functionally, binds and may inhibit nicotinic acetylcholine receptors (nAChR). This Micrurus nigrocinctus (Central American coral snake) protein is Nicotinic acetylcholine receptor-binding protein Mnn-1A.